The chain runs to 81 residues: Photosystem I iron-sulfur center (81 aa).

4Fe-4S ferredoxin-type domains lie at 2–31 (AHSVKIYDTCIGCTQCVRACPTDVLEMIPW) and 39–68 (IASAPRTEDCVGCKRCESACPTDFLSVRVY). Cys-11, Cys-14, Cys-17, Cys-21, Cys-48, Cys-51, Cys-54, and Cys-58 together coordinate [4Fe-4S] cluster.

In terms of assembly, the eukaryotic PSI reaction center is composed of at least 11 subunits. It depends on [4Fe-4S] cluster as a cofactor.

The protein localises to the plastid. The protein resides in the chloroplast thylakoid membrane. The enzyme catalyses reduced [plastocyanin] + hnu + oxidized [2Fe-2S]-[ferredoxin] = oxidized [plastocyanin] + reduced [2Fe-2S]-[ferredoxin]. In terms of biological role, apoprotein for the two 4Fe-4S centers FA and FB of photosystem I (PSI); essential for photochemical activity. FB is the terminal electron acceptor of PSI, donating electrons to ferredoxin. The C-terminus interacts with PsaA/B/D and helps assemble the protein into the PSI complex. Required for binding of PsaD and PsaE to PSI. PSI is a plastocyanin-ferredoxin oxidoreductase, converting photonic excitation into a charge separation, which transfers an electron from the donor P700 chlorophyll pair to the spectroscopically characterized acceptors A0, A1, FX, FA and FB in turn. This Zygnema circumcarinatum (Green alga) protein is Photosystem I iron-sulfur center.